The following is a 227-amino-acid chain: Thiamine-phosphate synthase (227 aa).

Residues 50 to 54 (QFRQK) and Asp82 each bind 4-amino-2-methyl-5-(diphosphooxymethyl)pyrimidine. Mg(2+) is bound by residues Asp83 and Asp102. Thr121 is a 4-amino-2-methyl-5-(diphosphooxymethyl)pyrimidine binding site. 2-[(2R,5Z)-2-carboxy-4-methylthiazol-5(2H)-ylidene]ethyl phosphate is bound at residue 147–149 (TTS). Lys150 is a binding site for 4-amino-2-methyl-5-(diphosphooxymethyl)pyrimidine. 2-[(2R,5Z)-2-carboxy-4-methylthiazol-5(2H)-ylidene]ethyl phosphate contacts are provided by residues Gly178 and 198 to 199 (LS).

Belongs to the thiamine-phosphate synthase family. Requires Mg(2+) as cofactor.

The enzyme catalyses 2-[(2R,5Z)-2-carboxy-4-methylthiazol-5(2H)-ylidene]ethyl phosphate + 4-amino-2-methyl-5-(diphosphooxymethyl)pyrimidine + 2 H(+) = thiamine phosphate + CO2 + diphosphate. The catalysed reaction is 2-(2-carboxy-4-methylthiazol-5-yl)ethyl phosphate + 4-amino-2-methyl-5-(diphosphooxymethyl)pyrimidine + 2 H(+) = thiamine phosphate + CO2 + diphosphate. It catalyses the reaction 4-methyl-5-(2-phosphooxyethyl)-thiazole + 4-amino-2-methyl-5-(diphosphooxymethyl)pyrimidine + H(+) = thiamine phosphate + diphosphate. It functions in the pathway cofactor biosynthesis; thiamine diphosphate biosynthesis; thiamine phosphate from 4-amino-2-methyl-5-diphosphomethylpyrimidine and 4-methyl-5-(2-phosphoethyl)-thiazole: step 1/1. In terms of biological role, condenses 4-methyl-5-(beta-hydroxyethyl)thiazole monophosphate (THZ-P) and 2-methyl-4-amino-5-hydroxymethyl pyrimidine pyrophosphate (HMP-PP) to form thiamine monophosphate (TMP). The chain is Thiamine-phosphate synthase from Salinibacter ruber (strain DSM 13855 / M31).